The following is a 671-amino-acid chain: DNA ligase (671 aa).

NAD(+)-binding positions include 32 to 36 (DVEYD), 81 to 82 (SL), and Glu-113. Lys-115 acts as the N6-AMP-lysine intermediate in catalysis. 4 residues coordinate NAD(+): Arg-136, Glu-173, Lys-290, and Lys-314. Zn(2+)-binding residues include Cys-408, Cys-411, Cys-426, and Cys-432. The BRCT domain occupies 593–671 (EIDSPFAGKT…EAEMLRLLGS (79 aa)).

It belongs to the NAD-dependent DNA ligase family. LigA subfamily. Mg(2+) is required as a cofactor. Mn(2+) serves as cofactor.

The enzyme catalyses NAD(+) + (deoxyribonucleotide)n-3'-hydroxyl + 5'-phospho-(deoxyribonucleotide)m = (deoxyribonucleotide)n+m + AMP + beta-nicotinamide D-nucleotide.. Its function is as follows. DNA ligase that catalyzes the formation of phosphodiester linkages between 5'-phosphoryl and 3'-hydroxyl groups in double-stranded DNA using NAD as a coenzyme and as the energy source for the reaction. It is essential for DNA replication and repair of damaged DNA. This Escherichia coli O17:K52:H18 (strain UMN026 / ExPEC) protein is DNA ligase.